We begin with the raw amino-acid sequence, 282 residues long: Elongation factor Ts (282 aa).

Residues 80–83 (TDFV) are involved in Mg(2+) ion dislocation from EF-Tu.

Belongs to the EF-Ts family.

The protein resides in the cytoplasm. In terms of biological role, associates with the EF-Tu.GDP complex and induces the exchange of GDP to GTP. It remains bound to the aminoacyl-tRNA.EF-Tu.GTP complex up to the GTP hydrolysis stage on the ribosome. The chain is Elongation factor Ts from Chlamydia trachomatis serovar L2b (strain UCH-1/proctitis).